The sequence spans 434 residues: Galactofuranosyl glycosyltransferase (434 aa).

Topologically, residues 1–18 (MAPPRWHHDRRRMAIFVR) are cytoplasmic. Residues 19–38 (VGLYTLLFLMGYVVPLIIFY) form a helical; Signal-anchor for type II membrane protein membrane-spanning segment. N-linked (GlcNAc...) asparagine glycans are attached at residues N39, N100, N162, and N388. Topologically, residues 39–434 (NRSRADTFED…KLLDFPVDPS (396 aa)) are lumenal.

The protein belongs to the glycosyltransferase 2 family.

The protein localises to the endoplasmic reticulum membrane. It participates in glycolipid biosynthesis; glycosylphosphatidylinositol-anchor biosynthesis. In terms of biological role, glycosyltransferase that may be responsible for the addition of galactofuranosyl residues to the nascent lipophosphoglycan (LPG) chain. It could alternatively be involved in the synthesis of the galactofuranosyl donor. The protein is Galactofuranosyl glycosyltransferase (LPG1) of Leishmania donovani.